The following is a 500-amino-acid chain: Lysine--tRNA ligase (500 aa).

Mg(2+) is bound by residues Asp412 and Glu419.

The protein belongs to the class-II aminoacyl-tRNA synthetase family. As to quaternary structure, homodimer. Mg(2+) serves as cofactor.

The protein localises to the cytoplasm. The catalysed reaction is tRNA(Lys) + L-lysine + ATP = L-lysyl-tRNA(Lys) + AMP + diphosphate. The chain is Lysine--tRNA ligase from Kineococcus radiotolerans (strain ATCC BAA-149 / DSM 14245 / SRS30216).